Consider the following 261-residue polypeptide: Cytochrome c oxidase subunit 3 (261 aa).

The Mitochondrial matrix segment spans residues 1-15 (MTHQTHAYHMVNPSP). A helical membrane pass occupies residues 16-34 (WPLTGALSALLMTSGLTMW). Topologically, residues 35-40 (FHFNSM) are mitochondrial intermembrane. The helical transmembrane segment at 41 to 66 (TLLMIGLTTNMLTMYQWWRDVIREST) threads the bilayer. Topologically, residues 67 to 72 (FQGHHT) are mitochondrial matrix. The helical transmembrane segment at 73-105 (PAVQKGLRYGMILFIISEVLFFTGFFWAFYHSS) threads the bilayer. Residues 106-128 (LAPTPELGGCWPPTGIHPLNPLE) are Mitochondrial intermembrane-facing. The helical transmembrane segment at 129–152 (VPLLNTSVLLASGVSITWAHHSLM) threads the bilayer. The Mitochondrial matrix portion of the chain corresponds to 153-155 (EGD). Residues 156–183 (RKHMLQALFITITLGVYFTLLQASEYYE) traverse the membrane as a helical segment. Topologically, residues 184 to 190 (APFTISD) are mitochondrial intermembrane. The chain crosses the membrane as a helical span at residues 191–223 (GVYGSTFFVATGFHGLHVIIGSTFLIVCFFRQL). Residues 224-232 (KFHFTSNHH) lie on the Mitochondrial matrix side of the membrane. Residues 233–256 (FGFEAAAWYWHFVDVVWLFLYVSI) form a helical membrane-spanning segment. The Mitochondrial intermembrane segment spans residues 257–261 (YWWGS).

This sequence belongs to the cytochrome c oxidase subunit 3 family. Component of the cytochrome c oxidase (complex IV, CIV), a multisubunit enzyme composed of 14 subunits. The complex is composed of a catalytic core of 3 subunits MT-CO1, MT-CO2 and MT-CO3, encoded in the mitochondrial DNA, and 11 supernumerary subunits COX4I1 (or COX4I2), COX5A, COX5B, COX6A2 (or COX6A1), COX6B1 (or COX6B2), COX6C, COX7A1 (or COX7A2), COX7B, COX7C, COX8B and NDUFA4, which are encoded in the nuclear genome. The complex exists as a monomer or a dimer and forms supercomplexes (SCs) in the inner mitochondrial membrane with NADH-ubiquinone oxidoreductase (complex I, CI) and ubiquinol-cytochrome c oxidoreductase (cytochrome b-c1 complex, complex III, CIII), resulting in different assemblies (supercomplex SCI(1)III(2)IV(1) and megacomplex MCI(2)III(2)IV(2)).

It localises to the mitochondrion inner membrane. It carries out the reaction 4 Fe(II)-[cytochrome c] + O2 + 8 H(+)(in) = 4 Fe(III)-[cytochrome c] + 2 H2O + 4 H(+)(out). Its function is as follows. Component of the cytochrome c oxidase, the last enzyme in the mitochondrial electron transport chain which drives oxidative phosphorylation. The respiratory chain contains 3 multisubunit complexes succinate dehydrogenase (complex II, CII), ubiquinol-cytochrome c oxidoreductase (cytochrome b-c1 complex, complex III, CIII) and cytochrome c oxidase (complex IV, CIV), that cooperate to transfer electrons derived from NADH and succinate to molecular oxygen, creating an electrochemical gradient over the inner membrane that drives transmembrane transport and the ATP synthase. Cytochrome c oxidase is the component of the respiratory chain that catalyzes the reduction of oxygen to water. Electrons originating from reduced cytochrome c in the intermembrane space (IMS) are transferred via the dinuclear copper A center (CU(A)) of subunit 2 and heme A of subunit 1 to the active site in subunit 1, a binuclear center (BNC) formed by heme A3 and copper B (CU(B)). The BNC reduces molecular oxygen to 2 water molecules using 4 electrons from cytochrome c in the IMS and 4 protons from the mitochondrial matrix. The polypeptide is Cytochrome c oxidase subunit 3 (MT-CO3) (Bos taurus (Bovine)).